A 464-amino-acid chain; its full sequence is Sensor protein IrlS (464 aa).

Residues 1 to 13 lie on the Periplasmic side of the membrane; the sequence is MIRRLLPRTLRAR. The helical transmembrane segment at 14 to 34 threads the bilayer; that stretch reads LTALIILSTAATLALSGVALY. Topologically, residues 35–166 are cytoplasmic; the sequence is SALHNRLVGM…DHALLRAYAY (132 aa). A helical membrane pass occupies residues 167-187; it reads TVVVIEVLAVVLTAALAYGIA. The region spanning 188–241 is the HAMP domain; sequence MLGLSPLRRLVARAEQMSSSRLAQPLPELDTSGELKEMEHAFNAMLKRLDESFV. Topologically, residues 188–464 are periplasmic; it reads MLGLSPLRRL…FWLKFPAHAA (277 aa). The region spanning 249–463 is the Histidine kinase domain; the sequence is NLAHDMRTPL…TFWLKFPAHA (215 aa). A Phosphohistidine; by autocatalysis modification is found at histidine 252.

It localises to the cell inner membrane. It catalyses the reaction ATP + protein L-histidine = ADP + protein N-phospho-L-histidine.. Functionally, member of the two-component regulatory system IrlR/IrlS. May be involved in invasion of eukaryotic cells and heavy-metal resistance. Probably activates IrlR by phosphorylation. This Burkholderia pseudomallei (strain K96243) protein is Sensor protein IrlS (irlS).